The following is a 140-amino-acid chain: Sex-regulated protein janus-B (140 aa).

Arg-42 serves as a coordination point for substrate. Residue His-69 is the Proton acceptor of the active site. 110–112 (SRT) is a binding site for substrate.

Belongs to the janus family.

Its function is as follows. JanA and janB regulate somatic sex differentiation. In Drosophila sechellia (Fruit fly), this protein is Sex-regulated protein janus-B (janB).